The chain runs to 479 residues: RAC-gamma serine/threonine-protein kinase (479 aa).

Serine 2 is modified (N-acetylserine). The PH domain occupies 5-107 (TIVKEDWVQK…WTEAIQAVAD (103 aa)). An intrachain disulfide couples cysteine 59 to cysteine 76. Positions 148-405 (FDYLKLLGKG…PKEIMRHSFF (258 aa)) constitute a Protein kinase domain. Residues 154–162 (LGKGTFGKV) and lysine 177 contribute to the ATP site. Catalysis depends on aspartate 271, which acts as the Proton acceptor. Cysteine 293 and cysteine 307 are joined by a disulfide. Threonine 302 carries an O-linked (GlcNAc) threonine glycan. Position 305 is a phosphothreonine; by PDPK1 (threonine 305). Residue threonine 309 is glycosylated (O-linked (GlcNAc) threonine). Residues 406 to 479 (SGVNWQDVYD…QFSYSASGRE (74 aa)) form the AGC-kinase C-terminal domain. The disordered stretch occupies residues 446–479 (ITPPEKDDDDGMDCMDNERRPHFPQFSYSASGRE). Position 447 is a phosphothreonine (threonine 447). The segment covering 451 to 460 (KDDDDGMDCM) has biased composition (acidic residues). Serine 472 carries the post-translational modification Phosphoserine; by PKC/PRKCZ. The O-linked (GlcNAc) serine; alternate glycan is linked to serine 472.

It belongs to the protein kinase superfamily. AGC Ser/Thr protein kinase family. RAC subfamily. Interacts (via PH domain) with TCL1A; this enhances AKT3 phosphorylation and activation. Interacts with TRAF6. Interacts with KCTD20. Interacts with BTBD10. Phosphorylation on Thr-305 and Ser-472 is required for full activity. Phosphorylation of the activation loop at Thr-305 by PDPK1/PDK1 is a prerequisite for full activation. Phosphorylation at Ser-472 by mTORC2 in response to growth factors plays a key role in AKT1 activation by facilitating subsequent phosphorylation of the activation loop by PDPK1/PDK1. Post-translationally, ubiquitinated. When fully phosphorylated and translocated into the nucleus, undergoes 'Lys-48'-polyubiquitination catalyzed by TTC3, leading to its degradation by the proteasome. In terms of processing, O-GlcNAcylation at Thr-302 and Thr-309 inhibits activating phosphorylation at Thr-305 via disrupting the interaction between AKT and PDPK1/PDK1.

It localises to the nucleus. The protein localises to the cytoplasm. Its subcellular location is the membrane. It carries out the reaction L-seryl-[protein] + ATP = O-phospho-L-seryl-[protein] + ADP + H(+). It catalyses the reaction L-threonyl-[protein] + ATP = O-phospho-L-threonyl-[protein] + ADP + H(+). Its activity is regulated as follows. Two specific sites, one in the kinase domain (Thr-305) and the other in the C-terminal regulatory region (Ser-472), need to be phosphorylated for its full activation. IGF-1 leads to the activation of AKT3, which may play a role in regulating cell survival. Functionally, AKT3 is one of 3 closely related serine/threonine-protein kinases (AKT1, AKT2 and AKT3) called the AKT kinase, and which regulate many processes including metabolism, proliferation, cell survival, growth and angiogenesis. This is mediated through serine and/or threonine phosphorylation of a range of downstream substrates. Over 100 substrate candidates have been reported so far, but for most of them, no isoform specificity has been reported. AKT3 is the least studied AKT isoform. It plays an important role in brain development and is crucial for the viability of malignant glioma cells. AKT3 isoform may also be the key molecule in up-regulation and down-regulation of MMP13 via IL13. Required for the coordination of mitochondrial biogenesis with growth factor-induced increases in cellular energy demands. Down-regulation by RNA interference reduces the expression of the phosphorylated form of BAD, resulting in the induction of caspase-dependent apoptosis. This chain is RAC-gamma serine/threonine-protein kinase (Akt3), found in Rattus norvegicus (Rat).